The following is a 550-amino-acid chain: Hydroxylamine reductase (550 aa).

[4Fe-4S] cluster contacts are provided by Cys7, Cys10, Cys19, and Cys25. 8 residues coordinate hybrid [4Fe-2O-2S] cluster: His244, Glu268, Cys312, Cys405, Cys433, Cys458, Glu493, and Lys495. At Cys405 the chain carries Cysteine persulfide.

It belongs to the HCP family. [4Fe-4S] cluster is required as a cofactor. Requires hybrid [4Fe-2O-2S] cluster as cofactor.

It is found in the cytoplasm. It catalyses the reaction A + NH4(+) + H2O = hydroxylamine + AH2 + H(+). In terms of biological role, catalyzes the reduction of hydroxylamine to form NH(3) and H(2)O. This chain is Hydroxylamine reductase, found in Porphyromonas gingivalis (strain ATCC 33277 / DSM 20709 / CIP 103683 / JCM 12257 / NCTC 11834 / 2561).